The following is a 392-amino-acid chain: Phosphoglycerate kinase (392 aa).

Residues D21 to N23, R36, H59 to R62, R117, and R150 contribute to the substrate site. ATP is bound by residues K200, G288, E319, and G345–S348.

It belongs to the phosphoglycerate kinase family. Monomer.

The protein localises to the cytoplasm. The enzyme catalyses (2R)-3-phosphoglycerate + ATP = (2R)-3-phospho-glyceroyl phosphate + ADP. Its pathway is carbohydrate degradation; glycolysis; pyruvate from D-glyceraldehyde 3-phosphate: step 2/5. The polypeptide is Phosphoglycerate kinase (Rubrobacter xylanophilus (strain DSM 9941 / JCM 11954 / NBRC 16129 / PRD-1)).